The primary structure comprises 342 residues: Protein FinQ (342 aa).

Residues 208-227 constitute a DNA-binding region (H-T-H motif); sequence RDREFNLLNAQISMVLYICS.

Its function is as follows. Transcriptional inhibitor of the F plasmid transfer genes. FinQ may regulate a gene or genes encoded on the IncI plasmids, and coincidentally may inhibit F transfer when coresident. In Escherichia coli, this protein is Protein FinQ (finQ).